We begin with the raw amino-acid sequence, 96 residues long: Nucleoid-associated protein DR_0199 (96 aa).

Belongs to the YbaB/EbfC family. Homodimer.

Its subcellular location is the cytoplasm. It is found in the nucleoid. Its function is as follows. Binds to DNA and alters its conformation. May be involved in regulation of gene expression, nucleoid organization and DNA protection. In Deinococcus radiodurans (strain ATCC 13939 / DSM 20539 / JCM 16871 / CCUG 27074 / LMG 4051 / NBRC 15346 / NCIMB 9279 / VKM B-1422 / R1), this protein is Nucleoid-associated protein DR_0199.